Here is a 357-residue protein sequence, read N- to C-terminus: 3'-hydroxy-N-methyl-(S)-coclaurine 4'-O-methyltransferase 2 (357 aa).

Asp226 is an S-adenosyl-L-methionine binding site. The active-site Proton acceptor is His264.

Belongs to the class I-like SAM-binding methyltransferase superfamily. Cation-independent O-methyltransferase family. COMT subfamily. As to quaternary structure, homodimer. In terms of tissue distribution, expressed in roots, stems, leaves and flowers.

The enzyme catalyses (S)-3'-hydroxy-N-methylcoclaurine + S-adenosyl-L-methionine = (S)-reticuline + S-adenosyl-L-homocysteine + H(+). Its pathway is alkaloid biosynthesis; (S)-reticuline biosynthesis; (S)-reticuline from (S)-norcoclaurine: step 4/4. Its function is as follows. Involved in the biosynthesis of benzylisoquinoline alkaloids. Catalyzes the transfer of the methyl group to the 4'-hydroxyl group of 3'-hydroxy-N-methylcoclaurine to form reticuline. Can also use laudanosoline and, with a lower activity, 6-O-methylnorlaudanosoline and norlaudanosoline as substrates. Also involved in the papaverine biosynthesis. This Papaver somniferum (Opium poppy) protein is 3'-hydroxy-N-methyl-(S)-coclaurine 4'-O-methyltransferase 2.